Consider the following 344-residue polypeptide: Protein RecA (344 aa).

65–72 (GPESSGKT) serves as a coordination point for ATP. Basic and acidic residues predominate over residues 323 to 337 (ELREKFQPAEAPREA). The disordered stretch occupies residues 323-344 (ELREKFQPAEAPREAGDDEDKE).

This sequence belongs to the RecA family.

Its subcellular location is the cytoplasm. Its function is as follows. Can catalyze the hydrolysis of ATP in the presence of single-stranded DNA, the ATP-dependent uptake of single-stranded DNA by duplex DNA, and the ATP-dependent hybridization of homologous single-stranded DNAs. It interacts with LexA causing its activation and leading to its autocatalytic cleavage. This Xanthomonas axonopodis pv. citri (strain 306) protein is Protein RecA.